Here is a 249-residue protein sequence, read N- to C-terminus: Large ribosomal subunit protein uL22m (249 aa).

A mitochondrion-targeting transit peptide spans 1-22 (MKYINQFMKISKGFLVPSSTIG). The disordered stretch occupies residues 70–98 (ANQKDDSNRQQKEERVKERPRSRISFKKQ). The segment covering 72–98 (QKDDSNRQQKEERVKERPRSRISFKKQ) has biased composition (basic and acidic residues).

Belongs to the universal ribosomal protein uL22 family. As to quaternary structure, component of the mitochondrial large ribosomal subunit (mt-LSU). Mature yeast 74S mitochondrial ribosomes consist of a small (37S) and a large (54S) subunit. The 37S small subunit contains a 15S ribosomal RNA (15S mt-rRNA) and at least 32 different proteins. The 54S large subunit contains a 21S rRNA (21S mt-rRNA) and at least 45 different proteins. uL22m forms the wall of the exit tunnel.

The protein localises to the mitochondrion. Component of the mitochondrial ribosome (mitoribosome), a dedicated translation machinery responsible for the synthesis of mitochondrial genome-encoded proteins, including at least some of the essential transmembrane subunits of the mitochondrial respiratory chain. The mitoribosomes are attached to the mitochondrial inner membrane and translation products are cotranslationally integrated into the membrane. The sequence is that of Large ribosomal subunit protein uL22m (mrpl22) from Schizosaccharomyces pombe (strain 972 / ATCC 24843) (Fission yeast).